The primary structure comprises 360 residues: UDP-3-O-acylglucosamine N-acyltransferase (360 aa).

The active-site Proton acceptor is the His-256. The tract at residues 341 to 360 is disordered; sequence EGSGAETAARPDDDRDEGRG. Residues 349–360 are compositionally biased toward basic and acidic residues; the sequence is ARPDDDRDEGRG.

This sequence belongs to the transferase hexapeptide repeat family. LpxD subfamily. Homotrimer.

The catalysed reaction is a UDP-3-O-[(3R)-3-hydroxyacyl]-alpha-D-glucosamine + a (3R)-hydroxyacyl-[ACP] = a UDP-2-N,3-O-bis[(3R)-3-hydroxyacyl]-alpha-D-glucosamine + holo-[ACP] + H(+). It functions in the pathway bacterial outer membrane biogenesis; LPS lipid A biosynthesis. In terms of biological role, catalyzes the N-acylation of UDP-3-O-acylglucosamine using 3-hydroxyacyl-ACP as the acyl donor. Is involved in the biosynthesis of lipid A, a phosphorylated glycolipid that anchors the lipopolysaccharide to the outer membrane of the cell. This is UDP-3-O-acylglucosamine N-acyltransferase from Rhodopseudomonas palustris (strain ATCC BAA-98 / CGA009).